The sequence spans 351 residues: Heme A synthase (351 aa).

Helical transmembrane passes span 17–37 (WLIL…ATRL), 103–123 (LIGL…WLGQ), 129–149 (LVGL…MVSS), 164–184 (LMTH…LWLD), 201–221 (AMAL…VAGL), 261–281 (FNHR…AWAF), 289–309 (EFAF…LTLV), and 316–336 (LALV…YTVW). Histidine 263 is a binding site for heme. Heme is bound at residue histidine 320.

It belongs to the COX15/CtaA family. Type 2 subfamily. As to quaternary structure, interacts with CtaB. Heme b is required as a cofactor.

The protein resides in the cell membrane. The enzyme catalyses Fe(II)-heme o + 2 A + H2O = Fe(II)-heme a + 2 AH2. It functions in the pathway porphyrin-containing compound metabolism; heme A biosynthesis; heme A from heme O: step 1/1. Catalyzes the conversion of heme O to heme A by two successive hydroxylations of the methyl group at C8. The first hydroxylation forms heme I, the second hydroxylation results in an unstable dihydroxymethyl group, which spontaneously dehydrates, resulting in the formyl group of heme A. The polypeptide is Heme A synthase (Hyphomonas neptunium (strain ATCC 15444)).